Consider the following 472-residue polypeptide: MATKCGNCGPGYSTPLEAMKGPREEIVYLPCIYRNTGTEAPDYLATVDVDPKSPQYCQVIHRLPMPNLKDELHHSGWNTCSSCFGDSTKSRTKLVLPSLISSRIYVVDVGSEPRALKLHKVIEPKDIHAKCELAFLHTSHCLASGEVMISSLGDVKGNGKGGFVLLDAETFEVKGTWERRGGAAPLGYDFWYQPRHNVMISTEWAAPNVLRDGFNPADVEAGLYGSHLYVWDWQRHEIVQTLSLKDGLIPLEIRFLHNPDAAQGFVGCALSSTIQRFYKNEGGTWSVEKVIQVPPKKVKGWLLPEMPGLITDILLSLDDRFLYFSNWLHGDLRQYDISDPQRPRLTGQLFVGGSIVKGGPVQVLEDQELKSQPEPLVVKGKRVAGGPQMIQLSLDGKRLYVTTSLYSAWDKQFYPDLIREGSVMLQVDVDTVKGGLKLNPNFLVDFGKEPLGPALAHELRYPGGDCSSDIWI.

A2 carries the N-acetylalanine modification. A phosphoserine mark is found at S111, S371, and S467.

It belongs to the selenium-binding protein family. Interacts with USP33. In terms of processing, the N-terminus is blocked.

The protein resides in the nucleus. It localises to the cytoplasm. The protein localises to the cytosol. It is found in the membrane. The catalysed reaction is methanethiol + O2 + H2O = hydrogen sulfide + formaldehyde + H2O2 + H(+). It participates in organosulfur degradation. Functionally, catalyzes the oxidation of methanethiol, an organosulfur compound known to be produced in substantial amounts by gut bacteria. Selenium-binding protein which may be involved in the sensing of reactive xenobiotics in the cytoplasm. May be involved in intra-Golgi protein transport. The protein is Methanethiol oxidase (SELENBP1) of Pongo abelii (Sumatran orangutan).